The following is an 833-amino-acid chain: Leucine--tRNA ligase (833 aa).

The short motif at 41-52 (PYPSGAGLHVGH) is the 'HIGH' region element. Positions 610–614 (KMSKS) match the 'KMSKS' region motif. K613 is an ATP binding site.

It belongs to the class-I aminoacyl-tRNA synthetase family.

It is found in the cytoplasm. It catalyses the reaction tRNA(Leu) + L-leucine + ATP = L-leucyl-tRNA(Leu) + AMP + diphosphate. In Streptococcus equi subsp. zooepidemicus (strain H70), this protein is Leucine--tRNA ligase.